Consider the following 645-residue polypeptide: Cell pattern formation-associated protein stuA (645 aa).

The disordered stretch occupies residues 1–52; it reads MNQMQPYADVHQPHMSTAAHAPASGPPAGLSHYSYPHQPSMMQPQQQQHQYG. Positions 18-52 are enriched in low complexity; it reads AAHAPASGPPAGLSHYSYPHQPSMMQPQQQQHQYG. The 107-residue stretch at 124–230 folds into the HTH APSES-type domain; that stretch reads RVTATLWEDE…HDIGALLYHP (107 aa). The segment at residues 158–179 is a DNA-binding region (H-T-H motif); that stretch reads GTKLLNVAGMTRGRRDGILKSE. Residues 246–645 form a disordered region; the sequence is VDRNRRPDSM…HTLAAQRARR (400 aa). Polar residues-rich tracts occupy residues 254-271 and 279-288; these read SMQT…SQAP and MTNSVGSAMS. A compositionally biased stretch (low complexity) spans 317 to 330; sequence SASSMMGMGNQGSS. The span at 336 to 365 shows a compositional bias: polar residues; sequence ANVQQHPQGNQPLSIDTGLSNARSVPTTPA. The span at 469-481 shows a compositional bias: low complexity; that stretch reads PYNGNRGPYGYNP. Polar residues-rich tracts occupy residues 502-542 and 569-584; these read SPHQ…NLYN and YASQ…NSSG. The tract at residues 585–613 is nuclear localization domain; it reads KRGRDEEDAETYRPDSVQGDDMGGLKRRK. Residues 586–597 show a composition bias toward basic and acidic residues; that stretch reads RGRDEEDAETYR.

The protein belongs to the EFG1/PHD1/stuA family.

It localises to the nucleus. Transcription factor that regulates asexual reproduction. Binds the StuA-response elements (StRE) with the consensus sequence 5'-(A/T)CGCG(T/A)N(A/C)-3' at the promoters of target genes. Regulates the expression of several effector genes (AvrLm1, AvrLm6 and AvrLm4-7) during infection stage. The polypeptide is Cell pattern formation-associated protein stuA (Leptosphaeria maculans (strain JN3 / isolate v23.1.3 / race Av1-4-5-6-7-8) (Blackleg fungus)).